A 215-amino-acid chain; its full sequence is Adenylate kinase (215 aa).

Residue 10-15 participates in ATP binding; it reads GAGKGT. Residues 30–59 form an NMP region; sequence STGDMLRAAIKAQTPMGKMAKEFMDAGKLV. AMP is bound by residues Thr31, Arg36, 57-59, 85-88, and Gln92; these read KLV and GFPR. Positions 122 to 159 are LID; the sequence is GRRVHPASGRTYHITYNPPKVDDKDNETGDDLIQREDD. ATP contacts are provided by residues Arg123 and 132-133; that span reads TY. Residues Arg156 and Arg167 each contribute to the AMP site. Position 201 (Gln201) interacts with ATP.

This sequence belongs to the adenylate kinase family. In terms of assembly, monomer.

It localises to the cytoplasm. It catalyses the reaction AMP + ATP = 2 ADP. Its pathway is purine metabolism; AMP biosynthesis via salvage pathway; AMP from ADP: step 1/1. Functionally, catalyzes the reversible transfer of the terminal phosphate group between ATP and AMP. Plays an important role in cellular energy homeostasis and in adenine nucleotide metabolism. This is Adenylate kinase from Hydrogenovibrio crunogenus (strain DSM 25203 / XCL-2) (Thiomicrospira crunogena).